Reading from the N-terminus, the 53-residue chain is Rubredoxin (53 aa).

The 53-residue stretch at 1–53 (MQKYVCDICGYVYDPAVGDPDNGVAPGTAFADLPEDWVCPECGVSKDEFSPEA) folds into the Rubredoxin-like domain. C6, C9, C39, and C42 together coordinate Fe cation.

It belongs to the rubredoxin family. Fe(3+) serves as cofactor.

Its function is as follows. Rubredoxin is a small nonheme, iron protein lacking acid-labile sulfide. Its single Fe, chelated to 4 Cys, functions as an electron acceptor and may also stabilize the conformation of the molecule. In Butyribacterium methylotrophicum, this protein is Rubredoxin.